A 216-amino-acid chain; its full sequence is Uracil phosphoribosyltransferase (216 aa).

5-phospho-alpha-D-ribose 1-diphosphate contacts are provided by residues Arg-85, Arg-110, and 136 to 144 (DPMLATGNS). Uracil is bound by residues Ile-201 and 206-208 (GDA). 5-phospho-alpha-D-ribose 1-diphosphate is bound at residue Asp-207.

The protein belongs to the UPRTase family. It depends on Mg(2+) as a cofactor.

It carries out the reaction UMP + diphosphate = 5-phospho-alpha-D-ribose 1-diphosphate + uracil. It participates in pyrimidine metabolism; UMP biosynthesis via salvage pathway; UMP from uracil: step 1/1. Allosterically activated by GTP. In terms of biological role, catalyzes the conversion of uracil and 5-phospho-alpha-D-ribose 1-diphosphate (PRPP) to UMP and diphosphate. In Rhodospirillum centenum (strain ATCC 51521 / SW), this protein is Uracil phosphoribosyltransferase.